Consider the following 178-residue polypeptide: ATP synthase subunit delta (178 aa).

Belongs to the ATPase delta chain family. As to quaternary structure, F-type ATPases have 2 components, F(1) - the catalytic core - and F(0) - the membrane proton channel. F(1) has five subunits: alpha(3), beta(3), gamma(1), delta(1), epsilon(1). F(0) has three main subunits: a(1), b(2) and c(10-14). The alpha and beta chains form an alternating ring which encloses part of the gamma chain. F(1) is attached to F(0) by a central stalk formed by the gamma and epsilon chains, while a peripheral stalk is formed by the delta and b chains.

The protein resides in the cell inner membrane. Functionally, f(1)F(0) ATP synthase produces ATP from ADP in the presence of a proton or sodium gradient. F-type ATPases consist of two structural domains, F(1) containing the extramembraneous catalytic core and F(0) containing the membrane proton channel, linked together by a central stalk and a peripheral stalk. During catalysis, ATP synthesis in the catalytic domain of F(1) is coupled via a rotary mechanism of the central stalk subunits to proton translocation. Its function is as follows. This protein is part of the stalk that links CF(0) to CF(1). It either transmits conformational changes from CF(0) to CF(1) or is implicated in proton conduction. The polypeptide is ATP synthase subunit delta (Pseudomonas putida (strain W619)).